The chain runs to 291 residues: Ribosome biogenesis protein BRX1 (291 aa).

The region spanning glutamine 31–glycine 232 is the Brix domain. Serine 285 is modified (phosphoserine).

It belongs to the BRX1 family. Part of a complex that includes BRX1, RPF1, RPF2 and SSF1 or SSF2.

The protein resides in the nucleus. Its subcellular location is the nucleolus. Its function is as follows. Required for biogenesis of the 60S ribosomal subunit. This chain is Ribosome biogenesis protein BRX1 (BRX1), found in Saccharomyces cerevisiae (strain ATCC 204508 / S288c) (Baker's yeast).